A 109-amino-acid polypeptide reads, in one-letter code: Nucleoid-associated protein PM0205 (109 aa).

This sequence belongs to the YbaB/EbfC family. As to quaternary structure, homodimer.

The protein resides in the cytoplasm. Its subcellular location is the nucleoid. Its function is as follows. Binds to DNA and alters its conformation. May be involved in regulation of gene expression, nucleoid organization and DNA protection. The chain is Nucleoid-associated protein PM0205 from Pasteurella multocida (strain Pm70).